We begin with the raw amino-acid sequence, 1186 residues long: Probable inactive serine/threonine-protein kinase DDB_G0293184 (1186 aa).

The span at 1 to 12 (MEQEDQQYEEDS) shows a compositional bias: acidic residues. 2 disordered regions span residues 1-55 (MEQE…NNDS) and 99-122 (MEQQQQQQHLQPPLSPNSASNTNF). Low complexity-rich tracts occupy residues 34–48 (TTTEITTTTTTTTPT) and 99–110 (MEQQQQQQHLQP). The Protein kinase domain occupies 173–437 (YESPPTLGKY…VHDLLRHPWL (265 aa)). ATP is bound by residues 179–187 (LGKYDKVIL) and K205. 2 disordered regions span residues 447–468 (SSSSSSQAHPTVQSNNLNGNVN) and 530–551 (YNNYNNNNNNNNNTNDNDNECG). Polar residues predominate over residues 453–468 (QAHPTVQSNNLNGNVN). The span at 530 to 545 (YNNYNNNNNNNNNTND) shows a compositional bias: low complexity. A coiled-coil region spans residues 631–659 (LKRTNQMANDLGRKYEILQSNIKRLEDYL). Over residues 766–784 (NNLDPSNNNESVNLSTSPG) the composition is skewed to polar residues. Disordered regions lie at residues 766 to 911 (NNLD…NGNN) and 959 to 988 (ENKKHQKQKSLDSTNKQSPGSLGGAGGDVS). Residues 785-836 (SLVNSNSNPSISNSLNNNNNNNNNNNNNNNGNPNVIITTNNNCNSNSNGNNI) show a composition bias toward low complexity. Positions 847–896 (KEVKEGKEIKEIKEPKEKDKDKEKDKDKEKDKDKEKDKDKEKEKDKDKEN) are enriched in basic and acidic residues. Positions 875-909 (EKDKDKEKDKDKEKEKDKDKENNNNNNSNNNNNNG) form a coiled coil. A compositionally biased stretch (low complexity) spans 897–911 (NNNNNSNNNNNNGNN). A compositionally biased stretch (polar residues) spans 969–978 (LDSTNKQSPG). Positions 1004–1186 (VRLDDLMTRE…LSFPKFNLSV (183 aa)) constitute a Rho-GAP domain.

The protein belongs to the protein kinase superfamily. STE Ser/Thr protein kinase family.

In Dictyostelium discoideum (Social amoeba), this protein is Probable inactive serine/threonine-protein kinase DDB_G0293184.